The chain runs to 614 residues: Replication protein A 70 kDa DNA-binding subunit (614 aa).

Positions 112-178 are disordered; sequence GNPVPYNEGQ…SSVKTPGGTQ (67 aa). Polar residues-rich tracts occupy residues 120 to 130 and 158 to 178; these read GQGQQRSSAPT and PSNQFSKASAPSSVKTPGGTQ. Positions 194–278 form a DNA-binding region, OB; that stretch reads WTICARVTQK…VKNDYEITFN (85 aa). The segment at 478–500 adopts a C4-type zinc-finger fold; it reads CPSQDCNKKVIDQQNGLYRCEKC.

It belongs to the replication factor A protein 1 family. In terms of assembly, component of the heterotrimeric canonical replication protein A complex (RPA).

The protein resides in the nucleus. Its subcellular location is the PML body. As part of the heterotrimeric replication protein A complex (RPA/RP-A), binds and stabilizes single-stranded DNA intermediates, that form during DNA replication or upon DNA stress. It prevents their reannealing and in parallel, recruits and activates different proteins and complexes involved in DNA metabolism. Thereby, it plays an essential role both in DNA replication and the cellular response to DNA damage. This Gallus gallus (Chicken) protein is Replication protein A 70 kDa DNA-binding subunit (RPA1).